A 120-amino-acid chain; its full sequence is Hydrogenase maturation factor HypA (120 aa).

His2 is a Ni(2+) binding site. Zn(2+) is bound by residues Cys73, His76, Cys89, and Cys92.

The protein belongs to the HypA/HybF family.

Its function is as follows. Involved in the maturation of [NiFe] hydrogenases. Required for nickel insertion into the metal center of the hydrogenase. This Deinococcus radiodurans (strain ATCC 13939 / DSM 20539 / JCM 16871 / CCUG 27074 / LMG 4051 / NBRC 15346 / NCIMB 9279 / VKM B-1422 / R1) protein is Hydrogenase maturation factor HypA.